The chain runs to 581 residues: 2-isopropylmalate synthase (581 aa).

One can recognise a Pyruvate carboxyltransferase domain in the interval 32–306 (PQWCAVDLRD…DPQLDFSDIK (275 aa)). Mg(2+)-binding residues include Asp-41, His-245, His-247, and Asn-281. Residues 455 to 581 (RSAPVEQIAL…KHQQLQNGGV (127 aa)) are regulatory domain.

This sequence belongs to the alpha-IPM synthase/homocitrate synthase family. LeuA type 2 subfamily. In terms of assembly, homodimer. It depends on Mg(2+) as a cofactor.

It is found in the cytoplasm. The enzyme catalyses 3-methyl-2-oxobutanoate + acetyl-CoA + H2O = (2S)-2-isopropylmalate + CoA + H(+). It participates in amino-acid biosynthesis; L-leucine biosynthesis; L-leucine from 3-methyl-2-oxobutanoate: step 1/4. In terms of biological role, catalyzes the condensation of the acetyl group of acetyl-CoA with 3-methyl-2-oxobutanoate (2-ketoisovalerate) to form 3-carboxy-3-hydroxy-4-methylpentanoate (2-isopropylmalate). In Corynebacterium efficiens (strain DSM 44549 / YS-314 / AJ 12310 / JCM 11189 / NBRC 100395), this protein is 2-isopropylmalate synthase.